A 466-amino-acid chain; its full sequence is 3-isopropylmalate dehydratase large subunit (466 aa).

Cys-347, Cys-407, and Cys-410 together coordinate [4Fe-4S] cluster.

This sequence belongs to the aconitase/IPM isomerase family. LeuC type 1 subfamily. Heterodimer of LeuC and LeuD. [4Fe-4S] cluster serves as cofactor.

The catalysed reaction is (2R,3S)-3-isopropylmalate = (2S)-2-isopropylmalate. Its pathway is amino-acid biosynthesis; L-leucine biosynthesis; L-leucine from 3-methyl-2-oxobutanoate: step 2/4. Its function is as follows. Catalyzes the isomerization between 2-isopropylmalate and 3-isopropylmalate, via the formation of 2-isopropylmaleate. The protein is 3-isopropylmalate dehydratase large subunit of Klebsiella pneumoniae (strain 342).